The chain runs to 537 residues: Eukaryotic translation initiation factor 3 subunit L (537 aa).

Positions 301-513 (TFSSILLYIQ…IHIADTKVSH (213 aa)) constitute a PCI domain.

This sequence belongs to the eIF-3 subunit L family. As to quaternary structure, component of the eukaryotic translation initiation factor 3 (eIF-3) complex.

It is found in the cytoplasm. Its function is as follows. Component of the eukaryotic translation initiation factor 3 (eIF-3) complex, which is involved in protein synthesis of a specialized repertoire of mRNAs and, together with other initiation factors, stimulates binding of mRNA and methionyl-tRNAi to the 40S ribosome. The eIF-3 complex specifically targets and initiates translation of a subset of mRNAs involved in cell proliferation. This is Eukaryotic translation initiation factor 3 subunit L from Aedes aegypti (Yellowfever mosquito).